The sequence spans 269 residues: Surfeit locus protein 4 (269 aa).

5 helical membrane passes run 64–84 (FLATCFVIINLIGQIGGCVLV), 92–112 (YACFGLFCIIALQTVAYSILW), 179–199 (FFSILQNMVGTALIILVAVGF), 203–223 (LAALTLVVWLLAINVYFNAFW), and 242–262 (TTSVIGGLLLVVALGPGGVSM). Positions 266–269 (KKEW) match the Di-lysine motif motif.

Belongs to the SURF4 family.

The protein localises to the endoplasmic reticulum membrane. It is found in the endoplasmic reticulum-Golgi intermediate compartment membrane. The protein resides in the golgi apparatus membrane. Functionally, endoplasmic reticulum cargo receptor that mediates the export of lipoproteins by recruiting cargos into COPII vesicles to facilitate their secretion. In Danio rerio (Zebrafish), this protein is Surfeit locus protein 4.